We begin with the raw amino-acid sequence, 139 residues long: Large-conductance mechanosensitive channel (139 aa).

2 helical membrane passes run 19-39 and 81-101; these read VAVIIGAAFGAIVSSMVADVI and GNFLTLTLNFLIVAFVLFMVV.

It belongs to the MscL family. Homopentamer.

The protein localises to the cell inner membrane. Functionally, channel that opens in response to stretch forces in the membrane lipid bilayer. May participate in the regulation of osmotic pressure changes within the cell. The chain is Large-conductance mechanosensitive channel from Nitrobacter hamburgensis (strain DSM 10229 / NCIMB 13809 / X14).